The chain runs to 436 residues: MAKPVVAIVGRPNVGKSTIFNRIVGERVSIVEDVPGVTRDRIYNSAEWLGKEFNIIDTGGIDLSDEPFLEQIRAQAEIAIDEADVIIFITNGREGVTDADEQVAKILYRSNKPIVLAINKVDNPEMRDQIYDFYSLGFGEPYPISGSHGLGLGDMLDAVRAHFPKEEEEEYPDDTVKFSLIGRPNVGKSSILNALLGEDRVIVSDIAGTTRDAIDTTYTFDGQDYVMIDTAGMRKRGKVYESTEKYSVLRAMRAIERSDVVLVVINAEEGIREQDKRIAGYAHDAGRAIIIVVNKWDAINKDEKTINVWTEDIREQFQFLSYAPIVFVSAKTKQRLNNLFPLINQVSDNHSLRVQSSMLNDVISDAVAMNPSPMDRGKRLKIFYTTQVAVKPPTFVVFVNDPELMHFSYERFLENRIREAFPFDGTPIRVIARKRK.

2 EngA-type G domains span residues 4–167 and 176–351; these read PVVA…PKEE and VKFS…DNHS. GTP contacts are provided by residues 10 to 17, 57 to 61, 119 to 122, 182 to 189, 229 to 233, and 294 to 297; these read GRPNVGKS, DTGGI, NKVD, DTAGM, and NKWD. One can recognise a KH-like domain in the interval 352-436; the sequence is LRVQSSMLND…PIRVIARKRK (85 aa).

This sequence belongs to the TRAFAC class TrmE-Era-EngA-EngB-Septin-like GTPase superfamily. EngA (Der) GTPase family. As to quaternary structure, associates with the 50S ribosomal subunit.

In terms of biological role, GTPase that plays an essential role in the late steps of ribosome biogenesis. In Listeria welshimeri serovar 6b (strain ATCC 35897 / DSM 20650 / CCUG 15529 / CIP 8149 / NCTC 11857 / SLCC 5334 / V8), this protein is GTPase Der.